The following is a 121-amino-acid chain: Protein MGF 110-5L (121 aa).

The N-terminal stretch at 1-20 (MLVIFLGILGLLANQVSSQL) is a signal peptide. Residues asparagine 62 and asparagine 116 are each glycosylated (N-linked (GlcNAc...) asparagine; by host).

The protein belongs to the asfivirus MGF 110 family.

This is Protein MGF 110-5L from African swine fever virus (isolate Portugal/Lis 57/1957) (ASFV).